We begin with the raw amino-acid sequence, 189 residues long: Large ribosomal subunit protein bL17 (189 aa).

A disordered region spans residues 126–189; the sequence is DRARRVKASQ…DADADEAPQN (64 aa). A compositionally biased stretch (low complexity) spans 139-180; the sequence is QDAPSEPQAAEEPAAEEAVAATEAVAAPADAEATDAEAGSAD.

It belongs to the bacterial ribosomal protein bL17 family. Part of the 50S ribosomal subunit. Contacts protein L32.

The chain is Large ribosomal subunit protein bL17 from Mycobacterium marinum (strain ATCC BAA-535 / M).